A 327-amino-acid polypeptide reads, in one-letter code: Phenylalanine--tRNA ligase alpha subunit (327 aa).

Glutamate 252 contacts Mg(2+).

The protein belongs to the class-II aminoacyl-tRNA synthetase family. Phe-tRNA synthetase alpha subunit type 1 subfamily. Tetramer of two alpha and two beta subunits. Mg(2+) serves as cofactor.

The protein localises to the cytoplasm. It carries out the reaction tRNA(Phe) + L-phenylalanine + ATP = L-phenylalanyl-tRNA(Phe) + AMP + diphosphate + H(+). The chain is Phenylalanine--tRNA ligase alpha subunit from Tolumonas auensis (strain DSM 9187 / NBRC 110442 / TA 4).